A 753-amino-acid chain; its full sequence is Taperin (753 aa).

Positions 141 to 348 (FDSPAAPRRR…IRPSSKPDME (208 aa)) are disordered. Over residues 182–197 (PAPPVLPSQPAPPISP) the composition is skewed to pro residues. Polar residues-rich tracts occupy residues 230 to 239 (LQKTGSNSFT) and 250 to 263 (VNRSLSNGPMTQES). S274 carries the phosphoserine modification. Over residues 300–322 (TPSATPVGPPAFLAPSPASATPS) the composition is skewed to low complexity. The segment covering 323–335 (QRQWVSSATSAND) has biased composition (polar residues). Basic and acidic residues predominate over residues 337 to 347 (FEIRPSSKPDM). Residues S402, S458, and S502 each carry the phosphoserine modification. Residues 438 to 488 (GCPRPAISDTDKSVRRQRPASPPPFLPATTEAEPAEGLGVPGLTKNGQEPV) are disordered. Disordered regions lie at residues 544-583 (FTVVPKRKPGTLQEPHLSQTNGQFQQGAEEQDADSLSGPH) and 637-676 (FEYPSESSLAQEEAEEEEEEEEEEEGEDGEEEEVGPDSEK). Positions 559–571 (HLSQTNGQFQQGA) are enriched in polar residues. Residues 648-672 (EEAEEEEEEEEEEEGEDGEEEEVGP) are compositionally biased toward acidic residues.

Belongs to the taperin family. Interacts with GRXCR2; the interaction restricts TPRN to the stereocilum basal region. Interacts with actin ACTB; the interaction may stabilize stereocilia. Interacts with CLIC5. Interacts with PTPRQ. TPRN, CLIC5 and PTPQR form concentric rings at the base of stereocilia and may form a complex. Interacts with phosphatase PPP1CA; the interaction results in inhibition of PPC1A phosphatase activity. Interacts with DNA damage response proteins XRCC6/KU70, XRCC5/KU80, PARP1, TOP1 and TOP2A; these interactions recruit TPRN to sites of DNA damage where it may play a role in DNA repair.

The protein resides in the cell projection. The protein localises to the stereocilium. It is found in the microvillus. It localises to the nucleus. Its subcellular location is the nucleoplasm. The protein resides in the cytoplasm. Its function is as follows. Essential for hearing. Required for maintenance of stereocilia on both inner and outer hair cells. Necessary for the integrity of the stereociliary rootlet. May act as an actin cytoskeleton regulator involved in the regulation of actin dynamics at the pointed end in hair cells. Forms rings at the base of stereocilia and binds actin filaments in the stereocilia which may stabilize the stereocilia. Acts as a strong inhibitor of PPP1CA phosphatase activity. Recruited to sites of DNA damage and may play a role in DNA damage repair. The sequence is that of Taperin (Tprn) from Rattus norvegicus (Rat).